We begin with the raw amino-acid sequence, 139 residues long: Protein GOS9 (139 aa).

The region spanning 5 to 139 (LVKIGTWGGN…VDSIGVYVHI (135 aa)) is the Jacalin-type lectin domain.

Expressed mainly in roots.

This is Protein GOS9 (GOS9) from Oryza sativa subsp. indica (Rice).